The chain runs to 180 residues: ATP synthase subunit delta (180 aa).

This sequence belongs to the ATPase delta chain family. In terms of assembly, F-type ATPases have 2 components, F(1) - the catalytic core - and F(0) - the membrane proton channel. F(1) has five subunits: alpha(3), beta(3), gamma(1), delta(1), epsilon(1). F(0) has three main subunits: a(1), b(2) and c(10-14). The alpha and beta chains form an alternating ring which encloses part of the gamma chain. F(1) is attached to F(0) by a central stalk formed by the gamma and epsilon chains, while a peripheral stalk is formed by the delta and b chains.

The protein localises to the cell membrane. Its function is as follows. F(1)F(0) ATP synthase produces ATP from ADP in the presence of a proton or sodium gradient. F-type ATPases consist of two structural domains, F(1) containing the extramembraneous catalytic core and F(0) containing the membrane proton channel, linked together by a central stalk and a peripheral stalk. During catalysis, ATP synthesis in the catalytic domain of F(1) is coupled via a rotary mechanism of the central stalk subunits to proton translocation. Functionally, this protein is part of the stalk that links CF(0) to CF(1). It either transmits conformational changes from CF(0) to CF(1) or is implicated in proton conduction. The chain is ATP synthase subunit delta from Enterococcus faecalis (strain ATCC 700802 / V583).